Reading from the N-terminus, the 351-residue chain is Anthranilate phosphoribosyltransferase (351 aa).

5-phospho-alpha-D-ribose 1-diphosphate-binding positions include G89, 92–93, T97, 99–102, 117–125, and S129; these read GD, NIST, and KHGNRSASG. G89 is a binding site for anthranilate. Position 101 (S101) interacts with Mg(2+). An anthranilate-binding site is contributed by N120. R175 serves as a coordination point for anthranilate. Mg(2+)-binding residues include D234 and E235.

This sequence belongs to the anthranilate phosphoribosyltransferase family. Homodimer. It depends on Mg(2+) as a cofactor.

It catalyses the reaction N-(5-phospho-beta-D-ribosyl)anthranilate + diphosphate = 5-phospho-alpha-D-ribose 1-diphosphate + anthranilate. Its pathway is amino-acid biosynthesis; L-tryptophan biosynthesis; L-tryptophan from chorismate: step 2/5. Catalyzes the transfer of the phosphoribosyl group of 5-phosphorylribose-1-pyrophosphate (PRPP) to anthranilate to yield N-(5'-phosphoribosyl)-anthranilate (PRA). This is Anthranilate phosphoribosyltransferase from Synechococcus sp. (strain CC9902).